The following is a 277-amino-acid chain: Large ribosomal subunit protein uL2 (277 aa).

Residues 222-277 (GVAMNPVDHPHGGGEGRTSGGRHPVTPWGKPTKGKKTRSNKATDKFIMRSRHQRKK) form a disordered region.

It belongs to the universal ribosomal protein uL2 family. As to quaternary structure, part of the 50S ribosomal subunit. Forms a bridge to the 30S subunit in the 70S ribosome.

Functionally, one of the primary rRNA binding proteins. Required for association of the 30S and 50S subunits to form the 70S ribosome, for tRNA binding and peptide bond formation. It has been suggested to have peptidyltransferase activity; this is somewhat controversial. Makes several contacts with the 16S rRNA in the 70S ribosome. This chain is Large ribosomal subunit protein uL2, found in Brucella ovis (strain ATCC 25840 / 63/290 / NCTC 10512).